The following is a 234-amino-acid chain: MAKLTKRMRVIREKVDATKEYGITEAVALLKELATAKFVESVDVAVNLGIDARKSDQNVRGATVLPNGTGRTVRVAVFTQGANAEAATAAGADLVGMEDLAEQVKRGELNFDVVIASPDAMRVVGQLGQILGPRGLMPNPKVGTVTPNVAEAVKNAKAGQVRYRNDKNGIIHSTIGKVDFTEAQLKENLESLLVALKKAKPSTSKGQFIKKVSLSTTMGAGMAVDQASLDTKAA.

This sequence belongs to the universal ribosomal protein uL1 family. In terms of assembly, part of the 50S ribosomal subunit.

Functionally, binds directly to 23S rRNA. The L1 stalk is quite mobile in the ribosome, and is involved in E site tRNA release. Its function is as follows. Protein L1 is also a translational repressor protein, it controls the translation of the L11 operon by binding to its mRNA. The chain is Large ribosomal subunit protein uL1 from Tolumonas auensis (strain DSM 9187 / NBRC 110442 / TA 4).